Here is a 488-residue protein sequence, read N- to C-terminus: Bifunctional protein HldE (488 aa).

Residues M1–S330 are ribokinase. N205–E208 provides a ligand contact to ATP. D275 is an active-site residue. Residues F356–S488 are cytidylyltransferase.

In the N-terminal section; belongs to the carbohydrate kinase PfkB family. This sequence in the C-terminal section; belongs to the cytidylyltransferase family. Homodimer.

It carries out the reaction D-glycero-beta-D-manno-heptose 7-phosphate + ATP = D-glycero-beta-D-manno-heptose 1,7-bisphosphate + ADP + H(+). The catalysed reaction is D-glycero-beta-D-manno-heptose 1-phosphate + ATP + H(+) = ADP-D-glycero-beta-D-manno-heptose + diphosphate. It participates in nucleotide-sugar biosynthesis; ADP-L-glycero-beta-D-manno-heptose biosynthesis; ADP-L-glycero-beta-D-manno-heptose from D-glycero-beta-D-manno-heptose 7-phosphate: step 1/4. Its pathway is nucleotide-sugar biosynthesis; ADP-L-glycero-beta-D-manno-heptose biosynthesis; ADP-L-glycero-beta-D-manno-heptose from D-glycero-beta-D-manno-heptose 7-phosphate: step 3/4. Its function is as follows. Catalyzes the phosphorylation of D-glycero-D-manno-heptose 7-phosphate at the C-1 position to selectively form D-glycero-beta-D-manno-heptose-1,7-bisphosphate. Functionally, catalyzes the ADP transfer from ATP to D-glycero-beta-D-manno-heptose 1-phosphate, yielding ADP-D-glycero-beta-D-manno-heptose. This is Bifunctional protein HldE from Pelobacter propionicus (strain DSM 2379 / NBRC 103807 / OttBd1).